The primary structure comprises 177 residues: Large ribosomal subunit protein uL5 (177 aa).

Belongs to the universal ribosomal protein uL5 family. In terms of assembly, part of the 50S ribosomal subunit; part of the 5S rRNA/L5/L18/L25 subcomplex. Contacts the 5S rRNA and the P site tRNA. Forms a bridge to the 30S subunit in the 70S ribosome.

In terms of biological role, this is one of the proteins that bind and probably mediate the attachment of the 5S RNA into the large ribosomal subunit, where it forms part of the central protuberance. In the 70S ribosome it contacts protein S13 of the 30S subunit (bridge B1b), connecting the 2 subunits; this bridge is implicated in subunit movement. Contacts the P site tRNA; the 5S rRNA and some of its associated proteins might help stabilize positioning of ribosome-bound tRNAs. This is Large ribosomal subunit protein uL5 from Ehrlichia ruminantium (strain Welgevonden).